Consider the following 265-residue polypeptide: uncharacterized protein (265 aa).

2 disordered regions span residues T21–H53 and H78–S133. The segment covering D90 to S101 has biased composition (acidic residues). The span at S114 to V123 shows a compositional bias: low complexity. Position 137–144 (A137–S144) interacts with ATP.

This is an uncharacterized protein from Saccharomyces cerevisiae (strain ATCC 204508 / S288c) (Baker's yeast).